The sequence spans 520 residues: Putative thymidine phosphorylase 1 (520 aa).

The protein belongs to the thymidine/pyrimidine-nucleoside phosphorylase family. Type 2 subfamily.

The enzyme catalyses thymidine + phosphate = 2-deoxy-alpha-D-ribose 1-phosphate + thymine. This Cupriavidus necator (strain ATCC 17699 / DSM 428 / KCTC 22496 / NCIMB 10442 / H16 / Stanier 337) (Ralstonia eutropha) protein is Putative thymidine phosphorylase 1.